A 22-amino-acid chain; its full sequence is Plasticin-TR (22 aa).

Belongs to the frog skin active peptide (FSAP) family. Plasticin subfamily. As to quaternary structure, exhibits a propensity to self-association and forms helical oligomers in membrane-mimetic environments. In terms of tissue distribution, expressed by the skin glands.

The protein resides in the secreted. Its subcellular location is the target cell membrane. Functionally, has no antimicrobial activity against Gram-negative bacterium E.coli ATCC 25922, Gram-positive bacterium S.epidermidis ATCC 12228 and against fungus C.albicans ATCC 24433 at concentrations up to 100 uM. Has an anti-inflammatory effect, since it inhibits the production of the pro-inflammatory cytokines TNF-alpha and IL-1 beta. Has high activity of stimulation of insulin release, which may protect the species from being eaten by predators by causing fatal hypoglycemia. Is not cytotoxic to cancer line cells. Does not show hemolysis on mouse erythrocytes. Adopts a mixture of alpha-helical and beta-sheet structures. The polypeptide is Plasticin-TR (Phyllomedusa trinitatis (Trinidad leaf frog)).